We begin with the raw amino-acid sequence, 275 residues long: Probable ribosomal RNA small subunit methyltransferase A (275 aa).

S-adenosyl-L-methionine-binding residues include Leu13, Gly38, Glu59, Asp84, and Asn101.

The protein belongs to the class I-like SAM-binding methyltransferase superfamily. rRNA adenine N(6)-methyltransferase family. RsmA subfamily.

The protein localises to the cytoplasm. Specifically dimethylates two adjacent adenosines in the loop of a conserved hairpin near the 3'-end of 16S rRNA in the 30S particle. May play a critical role in biogenesis of 30S subunits. This is Probable ribosomal RNA small subunit methyltransferase A from Methanocaldococcus jannaschii (strain ATCC 43067 / DSM 2661 / JAL-1 / JCM 10045 / NBRC 100440) (Methanococcus jannaschii).